A 126-amino-acid chain; its full sequence is Large ribosomal subunit protein bL12 (126 aa).

Belongs to the bacterial ribosomal protein bL12 family. In terms of assembly, homodimer. Part of the ribosomal stalk of the 50S ribosomal subunit. Forms a multimeric L10(L12)X complex, where L10 forms an elongated spine to which 2 to 4 L12 dimers bind in a sequential fashion. Binds GTP-bound translation factors.

In terms of biological role, forms part of the ribosomal stalk which helps the ribosome interact with GTP-bound translation factors. Is thus essential for accurate translation. The sequence is that of Large ribosomal subunit protein bL12 from Bordetella petrii (strain ATCC BAA-461 / DSM 12804 / CCUG 43448).